A 147-amino-acid polypeptide reads, in one-letter code: Hemoglobin subunit delta (147 aa).

Positions 3–147 constitute a Globin domain; it reads HLTPEEKTAV…VANALAHKYH (145 aa). Serine 51 bears the Phosphoserine mark. Residues histidine 64 and histidine 93 each contribute to the heme b site.

This sequence belongs to the globin family. In terms of assembly, heterotetramer of two delta chains and two alpha chains. In terms of tissue distribution, red blood cells.

The sequence is that of Hemoglobin subunit delta (HBD) from Gorilla gorilla gorilla (Western lowland gorilla).